Consider the following 413-residue polypeptide: Probable protein S-acyltransferase 3 (413 aa).

2 consecutive transmembrane segments (helical) span residues 65 to 85 (LTSF…LVWI) and 96 to 116 (VLAS…LTSA). In terms of domain architecture, DHHC spans 171 to 221 (KFCDTCLLYRPPRASHCSICNNCVQRFDHHCPWVGQCIARRNYPFFICFIS). Catalysis depends on Cys-201, which acts as the S-palmitoyl cysteine intermediate. A run of 2 helical transmembrane segments spans residues 216-236 (FICF…FSWI) and 255-275 (SVIL…LTIF). Positions 364-413 (RDSPRKLPLPTRNLDDIKDISDNYDRSTTTREDASDRDPSFFSSQLDLPK) are disordered. Residues 376–402 (NLDDIKDISDNYDRSTTTREDASDRDP) are compositionally biased toward basic and acidic residues. Residues 404–413 (FFSSQLDLPK) are compositionally biased toward polar residues.

This sequence belongs to the DHHC palmitoyltransferase family. In terms of tissue distribution, expressed in flowers and pollen.

Its subcellular location is the endoplasmic reticulum membrane. The protein localises to the cytoplasmic vesicle membrane. The enzyme catalyses L-cysteinyl-[protein] + hexadecanoyl-CoA = S-hexadecanoyl-L-cysteinyl-[protein] + CoA. Functionally, palmitoyl acyltransferase. The protein is Probable protein S-acyltransferase 3 (PAT03) of Arabidopsis thaliana (Mouse-ear cress).